The following is a 169-amino-acid chain: PTS system glucose-specific EIIA component (169 aa).

The region spanning 39–143 is the PTS EIIA type-1 domain; sequence DVVFAEKIVG…STLTPVVISN (105 aa). The Zn(2+) site is built by H76 and H91. Residue H91 is the Tele-phosphohistidine intermediate; for EIIA activity of the active site. H91 bears the Phosphohistidine; by HPr mark.

Heterodimer with glycerol kinase (glpk). Zn(2+) is required as a cofactor.

It localises to the cytoplasm. The phosphoenolpyruvate-dependent sugar phosphotransferase system (sugar PTS), a major carbohydrate active transport system, catalyzes the phosphorylation of incoming sugar substrates concomitantly with their translocation across the cell membrane. The enzyme II complex composed of PtsG and Crr is involved in glucose transport. This Escherichia coli O6:H1 (strain CFT073 / ATCC 700928 / UPEC) protein is PTS system glucose-specific EIIA component (crr).